We begin with the raw amino-acid sequence, 457 residues long: Multidrug resistance protein MdtK (457 aa).

Transmembrane regions (helical) follow at residues 11-31 (LLAL…MGVV), 53-73 (IWLP…PIVA), 93-113 (WLAT…RFII), 127-147 (AIGF…YQVL), 160-180 (GMII…AFIY), 188-208 (LGGI…FLMM), 243-263 (LPVG…ALLV), 276-296 (IALN…IAAT), 316-336 (ITAL…SIIF), 357-377 (LMLF…GSGV), 387-407 (IFFI…YLLG), and 416-436 (MGPA…AIMM).

The protein belongs to the multi antimicrobial extrusion (MATE) (TC 2.A.66.1) family. MdtK subfamily.

It localises to the cell inner membrane. Its function is as follows. Multidrug efflux pump that functions probably as a Na(+)/drug antiporter. The chain is Multidrug resistance protein MdtK from Proteus mirabilis (strain HI4320).